Here is a 184-residue protein sequence, read N- to C-terminus: Large ribosomal subunit protein uL6 (184 aa).

The protein belongs to the universal ribosomal protein uL6 family. As to quaternary structure, part of the 50S ribosomal subunit.

In terms of biological role, this protein binds to the 23S rRNA, and is important in its secondary structure. It is located near the subunit interface in the base of the L7/L12 stalk, and near the tRNA binding site of the peptidyltransferase center. The chain is Large ribosomal subunit protein uL6 from Salinibacter ruber (strain DSM 13855 / M31).